Consider the following 635-residue polypeptide: Probable retaining alpha-galactosidase (635 aa).

An N-terminal signal peptide occupies residues 1 to 30 (MARSVRRTTLALLLSAVLAMTLFVTAPAHA). Residue Asp-179 participates in Ca(2+) binding. The Nucleophile role is filled by Asp-397. Ca(2+) contacts are provided by Glu-446 and Glu-452. The active-site Proton donor/acceptor is Glu-452.

It belongs to the glycosyl hydrolase 97 family. It depends on Ca(2+) as a cofactor.

The enzyme catalyses Hydrolysis of terminal, non-reducing alpha-D-galactose residues in alpha-D-galactosides, including galactose oligosaccharides, galactomannans and galactolipids.. The chain is Probable retaining alpha-galactosidase from Streptomyces bingchenggensis (strain BCW-1).